Here is a 423-residue protein sequence, read N- to C-terminus: 5-hydroxytryptamine receptor 1A-alpha (423 aa).

Residues 1 to 47 lie on the Extracellular side of the membrane; the sequence is MDLRATSSNDSNATSGYSDTAAVDWDEGENATGSGSLPDPELSYQII. N-linked (GlcNAc...) asparagine glycans are attached at residues asparagine 9, asparagine 12, and asparagine 30. A helical transmembrane segment spans residues 48-68; it reads TSLFLGALILCSIFGNSCVVA. Residues 69–82 are Cytoplasmic-facing; the sequence is AIALERSLQNVANY. Residues 83-107 form a helical membrane-spanning segment; it reads LIGSLAVTDLMVSVLVLPMAALYQV. Residues 108-116 lie on the Extracellular side of the membrane; it reads LNKWTLGQD. Residues 117 to 141 form a helical membrane-spanning segment; sequence ICDLFIALDVLCCTSSILHLCAIAL. A disulfide bridge connects residues cysteine 118 and cysteine 196. The serotonin site is built by aspartate 125 and cysteine 129. A DRY motif; important for ligand-induced conformation changes motif is present at residues 142 to 144; it reads DRY. Residues 142-161 are Cytoplasmic-facing; sequence DRYWAITDPIDYVNKRTPRR. The chain crosses the membrane as a helical span at residues 162 to 183; that stretch reads AAVLISVTWLIGFSISIPPMLG. Topologically, residues 184–202 are extracellular; the sequence is WRSAEDRANPDACIISQDP. Residues 203–225 form a helical membrane-spanning segment; the sequence is GYTIYSTFGAFYIPLILMLVLYG. The Cytoplasmic segment spans residues 226 to 347; that stretch reads RIFKAARFRI…LARERKTVKT (122 aa). The interval 311–332 is disordered; the sequence is LPLPNTPQSSSHENINEKTTGT. Residues 316-329 are compositionally biased toward polar residues; it reads TPQSSSHENINEKT. 1D-myo-inositol 4-phosphate-binding residues include serine 320, lysine 346, threonine 347, and glycine 353. Residues 348–371 traverse the membrane as a helical segment; that stretch reads LGIIMGTFIFCWLPFFIVALVLPF. Residues 372 to 379 are Extracellular-facing; sequence CAENCYMP. A helical membrane pass occupies residues 380-404; it reads EWLGAVINWLGYSNSLLNPIIYAYF. The short motif at 397–401 is the NPxxY motif; important for ligand-induced conformation changes and signaling element; sequence NPIIY. Residues phenylalanine 404, asparagine 405, and lysine 406 each coordinate 1D-myo-inositol 4-phosphate. Residues 405-423 lie on the Cytoplasmic side of the membrane; it reads NKDFQSAFKKILRCKFHRH.

Belongs to the G-protein coupled receptor 1 family. 5-hydroxytryptamine receptor subfamily.

It localises to the cell membrane. With respect to regulation, G-protein coupled receptor activity is regulated by lipids: phosphatidylinositol 4-phosphate increases HTR1A-mediated activity. Functionally, G-protein coupled receptor for 5-hydroxytryptamine (serotonin). Also functions as a receptor for various drugs and psychoactive substances. Ligand binding causes a conformation change that triggers signaling via guanine nucleotide-binding proteins (G proteins) and modulates the activity of downstream effectors, such as adenylate cyclase. HTR1A is coupled to G(i)/G(o) G alpha proteins and mediates inhibitory neurotransmission: signaling inhibits adenylate cyclase activity and activates a phosphatidylinositol-calcium second messenger system that regulates the release of Ca(2+) ions from intracellular stores. Beta-arrestin family members regulate signaling by mediating both receptor desensitization and resensitization processes. In Takifugu rubripes (Japanese pufferfish), this protein is 5-hydroxytryptamine receptor 1A-alpha (htr1aa).